A 190-amino-acid chain; its full sequence is dTTP/UTP pyrophosphatase (190 aa).

Residue Asp-71 is the Proton acceptor of the active site.

It belongs to the Maf family. YhdE subfamily. A divalent metal cation is required as a cofactor.

The protein resides in the cytoplasm. It catalyses the reaction dTTP + H2O = dTMP + diphosphate + H(+). The catalysed reaction is UTP + H2O = UMP + diphosphate + H(+). In terms of biological role, nucleoside triphosphate pyrophosphatase that hydrolyzes dTTP and UTP. May have a dual role in cell division arrest and in preventing the incorporation of modified nucleotides into cellular nucleic acids. This is dTTP/UTP pyrophosphatase from Xanthomonas euvesicatoria pv. vesicatoria (strain 85-10) (Xanthomonas campestris pv. vesicatoria).